The following is a 250-amino-acid chain: tRNA (guanine-N(1)-)-methyltransferase (250 aa).

S-adenosyl-L-methionine-binding positions include Gly116 and 136 to 141 (IGDYVL).

Belongs to the RNA methyltransferase TrmD family. In terms of assembly, homodimer.

The protein resides in the cytoplasm. The enzyme catalyses guanosine(37) in tRNA + S-adenosyl-L-methionine = N(1)-methylguanosine(37) in tRNA + S-adenosyl-L-homocysteine + H(+). In terms of biological role, specifically methylates guanosine-37 in various tRNAs. In Stutzerimonas stutzeri (strain A1501) (Pseudomonas stutzeri), this protein is tRNA (guanine-N(1)-)-methyltransferase.